The chain runs to 281 residues: 2,3,4,5-tetrahydropyridine-2,6-dicarboxylate N-succinyltransferase (281 aa).

Residues R108 and D145 each coordinate substrate.

This sequence belongs to the transferase hexapeptide repeat family. Homotrimer.

Its subcellular location is the cytoplasm. It carries out the reaction (S)-2,3,4,5-tetrahydrodipicolinate + succinyl-CoA + H2O = (S)-2-succinylamino-6-oxoheptanedioate + CoA. It participates in amino-acid biosynthesis; L-lysine biosynthesis via DAP pathway; LL-2,6-diaminopimelate from (S)-tetrahydrodipicolinate (succinylase route): step 1/3. The polypeptide is 2,3,4,5-tetrahydropyridine-2,6-dicarboxylate N-succinyltransferase (Rhodopseudomonas palustris (strain ATCC BAA-98 / CGA009)).